A 457-amino-acid polypeptide reads, in one-letter code: tRNA-2-methylthio-N(6)-dimethylallyladenosine synthase (457 aa).

Positions 3-120 (KKVYVKTFGC…LPQMIDARRE (118 aa)) constitute an MTTase N-terminal domain. [4Fe-4S] cluster is bound by residues C12, C49, C83, C157, C161, and C164. The 235-residue stretch at 143–377 (RVEGPSAFVS…QATIEENVAR (235 aa)) folds into the Radical SAM core domain. One can recognise a TRAM domain in the interval 380-447 (QSMLGKVERI…PHSLRGELVL (68 aa)).

This sequence belongs to the methylthiotransferase family. MiaB subfamily. Monomer. It depends on [4Fe-4S] cluster as a cofactor.

The protein resides in the cytoplasm. It catalyses the reaction N(6)-dimethylallyladenosine(37) in tRNA + (sulfur carrier)-SH + AH2 + 2 S-adenosyl-L-methionine = 2-methylsulfanyl-N(6)-dimethylallyladenosine(37) in tRNA + (sulfur carrier)-H + 5'-deoxyadenosine + L-methionine + A + S-adenosyl-L-homocysteine + 2 H(+). Its function is as follows. Catalyzes the methylthiolation of N6-(dimethylallyl)adenosine (i(6)A), leading to the formation of 2-methylthio-N6-(dimethylallyl)adenosine (ms(2)i(6)A) at position 37 in tRNAs that read codons beginning with uridine. The sequence is that of tRNA-2-methylthio-N(6)-dimethylallyladenosine synthase from Burkholderia thailandensis (strain ATCC 700388 / DSM 13276 / CCUG 48851 / CIP 106301 / E264).